Reading from the N-terminus, the 750-residue chain is Photosystem I P700 chlorophyll a apoprotein A1 (750 aa).

Helical transmembrane passes span 70–93 (VFSAHFGQLAIIFIWLSGMYFHGA), 156–179 (LYSTAIGGLVFAALMLFAGWFHYH), 195–219 (LNHHLAGLLGLGSLSWAGHQVHVSL), 291–309 (TAHHHLAIAVLFLVAGHMY), 346–369 (WHAQLALNLAMLGSLTIIVAHHMY), 385–411 (LSLFTHHMWIGGFLIVGAAAHAAIFMV), 433–455 (AIISHLNWVCIFLGFHSFGLYIH), and 531–549 (FLVHHIHAFTIHVTVLILL). Cys573 and Cys582 together coordinate [4Fe-4S] cluster. A run of 2 helical transmembrane segments spans residues 589–610 (HVFLGLFWMYNSISVVIFHFSW) and 664–686 (LSAYGLLFLGAHFVWAFSLMFLF). His675 contributes to the chlorophyll a' binding site. Residues Met683 and Tyr691 each coordinate chlorophyll a. Trp692 contributes to the phylloquinone binding site. Residues 724-744 (AVGVAHYLLGGIATTWAFFLA) form a helical membrane-spanning segment.

The protein belongs to the PsaA/PsaB family. In terms of assembly, the PsaA/B heterodimer binds the P700 chlorophyll special pair and subsequent electron acceptors. PSI consists of a core antenna complex that captures photons, and an electron transfer chain that converts photonic excitation into a charge separation. The eukaryotic PSI reaction center is composed of at least 11 subunits. It depends on P700 is a chlorophyll a/chlorophyll a' dimer, A0 is one or more chlorophyll a, A1 is one or both phylloquinones and FX is a shared 4Fe-4S iron-sulfur center. as a cofactor.

It localises to the plastid. Its subcellular location is the chloroplast thylakoid membrane. It carries out the reaction reduced [plastocyanin] + hnu + oxidized [2Fe-2S]-[ferredoxin] = oxidized [plastocyanin] + reduced [2Fe-2S]-[ferredoxin]. Functionally, psaA and PsaB bind P700, the primary electron donor of photosystem I (PSI), as well as the electron acceptors A0, A1 and FX. PSI is a plastocyanin-ferredoxin oxidoreductase, converting photonic excitation into a charge separation, which transfers an electron from the donor P700 chlorophyll pair to the spectroscopically characterized acceptors A0, A1, FX, FA and FB in turn. Oxidized P700 is reduced on the lumenal side of the thylakoid membrane by plastocyanin. This is Photosystem I P700 chlorophyll a apoprotein A1 from Marchantia polymorpha (Common liverwort).